The primary structure comprises 124 residues: Multifunctional methyltransferase subunit TRM112 homolog B (124 aa).

One can recognise a TRM112 domain in the interval 2 to 120 (RLIVHNMLSC…SKGIPNMLLH (119 aa)).

This sequence belongs to the TRM112 family. In terms of assembly, interacts with TRM9. Expressed in anthers.

Acts as an activator of both rRNA/tRNA and protein methyltransferases. Required for TRM9 tRNA methyltransferase activity. This Arabidopsis thaliana (Mouse-ear cress) protein is Multifunctional methyltransferase subunit TRM112 homolog B.